A 377-amino-acid chain; its full sequence is MRFLPCIATLAATASALAIGDHVRSDDQYVLELAPGQTKVVTEAEKWALRAEGKRFFDITERASSLELASNKKQKLAVTYPDSVQHNETVQNLIKSLDKKNFETVLQPFSEFHNRYYKSDNGKKSSEWLQGKIQEIISASGAKGVTVEPFKHSFPQSSLIAKIPGKSDKTIVLGAHQDSINLDSPSEGRAPGADDDGSGVVTILEAFRVLLTDEKVAAGEAPNTVEFHFYAGEEGGLLGSQDIFEQYSQKSRDVKAMLQQDMTGYTKGTTDAGKPESIGIITDNVDENLTKFLKVIVDAYCTIPTVDSKCGYGCSDHASATKYGYPAAFAFESAFGDDSPYIHSADDTIETVNFDHVLQHGRLTLGFAYELAFADSL.

Positions 1–18 are cleaved as a signal peptide; it reads MRFLPCIATLAATASALA. Positions 19 to 79 are excised as a propeptide; it reads IGDHVRSDDQ…SNKKQKLAVT (61 aa). N-linked (GlcNAc...) asparagine glycosylation is present at N87. Residues H176, D195, E234, and D261 each contribute to the Zn(2+) site. The N-linked (GlcNAc...) asparagine glycan is linked to N288. A disulfide bridge connects residues C310 and C314. Residue H343 participates in Zn(2+) binding.

The protein belongs to the peptidase M28 family. M28E subfamily. As to quaternary structure, monomer. It depends on Zn(2+) as a cofactor.

Its subcellular location is the secreted. With respect to regulation, calcium, magnesium and manganese cations reduce peptidase activity to 20.3-51.3 percent. The metal ion chelating reagent EDTA almost completely inhibits activity. The protease inhibitor bacitracin and the aminopeptidase B inhibitor bestatin, as well as DTT and beta-mercaptoethanol act also as lap A inhibitorsD. In terms of biological role, extracellular aminopeptidase that allows assimilation of proteinaceous substrates. The sequence is that of Leucine aminopeptidase A (lapA) from Aspergillus oryzae (strain ATCC 42149 / RIB 40) (Yellow koji mold).